The following is a 684-amino-acid chain: Glycine--tRNA ligase beta subunit (684 aa).

Belongs to the class-II aminoacyl-tRNA synthetase family. In terms of assembly, tetramer of two alpha and two beta subunits.

It is found in the cytoplasm. The enzyme catalyses tRNA(Gly) + glycine + ATP = glycyl-tRNA(Gly) + AMP + diphosphate. The chain is Glycine--tRNA ligase beta subunit from Pseudomonas putida (strain ATCC 47054 / DSM 6125 / CFBP 8728 / NCIMB 11950 / KT2440).